Consider the following 582-residue polypeptide: Formate--tetrahydrofolate ligase (582 aa).

65 to 72 (TPLGEGKT) is a binding site for ATP.

This sequence belongs to the formate--tetrahydrofolate ligase family.

The catalysed reaction is (6S)-5,6,7,8-tetrahydrofolate + formate + ATP = (6R)-10-formyltetrahydrofolate + ADP + phosphate. The protein operates within one-carbon metabolism; tetrahydrofolate interconversion. This Aliivibrio fischeri (strain ATCC 700601 / ES114) (Vibrio fischeri) protein is Formate--tetrahydrofolate ligase.